We begin with the raw amino-acid sequence, 393 residues long: Probable N-acetyl-LL-diaminopimelate aminotransferase (393 aa).

Position 231 is an N6-(pyridoxal phosphate)lysine (Lys231).

It belongs to the class-I pyridoxal-phosphate-dependent aminotransferase family. Homodimer. Pyridoxal 5'-phosphate is required as a cofactor.

It localises to the cytoplasm. The enzyme catalyses N-acetyl-(2S,6S)-2,6-diaminopimelate + 2-oxoglutarate = L-2-acetamido-6-oxoheptanedioate + L-glutamate. It participates in amino-acid biosynthesis; L-lysine biosynthesis via DAP pathway; LL-2,6-diaminopimelate from (S)-tetrahydrodipicolinate (acetylase route): step 2/3. In terms of biological role, essential for murein biosynthesis. Probably catalyzes the conversion of L-2-acetamido-6-oxopimelate to N-acetyl-LL-2,6-diaminopimelate. This Bacillus subtilis (strain 168) protein is Probable N-acetyl-LL-diaminopimelate aminotransferase.